Here is an 85-residue protein sequence, read N- to C-terminus: MEKLTVLILVATVLLMIQVLAQSGGDKHLKRRPKQYATKRLSALMRGHRQCTPQNVQCEEDDECCSNLECKCSTVPDCNFPKCRP.

The first 23 residues, 1–23 (MEKLTVLILVATVLLMIQVLAQS), serve as a signal peptide directing secretion. Residues 24 to 49 (GGDKHLKRRPKQYATKRLSALMRGHR) constitute a propeptide that is removed on maturation. A Pyrrolidone carboxylic acid modification is found at Gln-50.

Belongs to the conotoxin O2 superfamily. Post-translationally, contains 4 disulfide bonds. In terms of tissue distribution, expressed by the venom duct.

Its subcellular location is the secreted. The protein is Conotoxin Lv15a of Conus lividus (Livid cone).